Consider the following 513-residue polypeptide: Ribonuclease Y (513 aa).

Residues 3–23 (IGTLLLFTFLGLVAGATAVWL) traverse the membrane as a helical segment. A disordered region spans residues 77-96 (LQSVESKLKSREQTLNQRQE). Basic and acidic residues predominate over residues 82-96 (SKLKSREQTLNQRQE). The KH domain maps to 203–263 (SVTVFHIESD…VRREIARLAL (61 aa)). The HD domain occupies 329 to 422 (LLQHSRETAN…VQVCDAISGA (94 aa)).

Belongs to the RNase Y family.

Its subcellular location is the cell membrane. Its function is as follows. Endoribonuclease that initiates mRNA decay. The polypeptide is Ribonuclease Y (Porphyromonas gingivalis (strain ATCC BAA-308 / W83)).